The primary structure comprises 106 residues: MDQFKHIDVKGAQALIEQNEARLVDIRDPQSFAVAHSETAYHLTNDTMVSFMDEVEFEQPILVMCYHGISSQGAAQYLVNQGFEEVYSVDGGFEASYRAELPVIAG.

Residues 17-105 (EQNEARLVDI…SYRAELPVIA (89 aa)) form the Rhodanese domain. Cysteine 65 acts as the Cysteine persulfide intermediate in catalysis.

This sequence belongs to the GlpE family.

Its subcellular location is the cytoplasm. It carries out the reaction thiosulfate + hydrogen cyanide = thiocyanate + sulfite + 2 H(+). The enzyme catalyses thiosulfate + [thioredoxin]-dithiol = [thioredoxin]-disulfide + hydrogen sulfide + sulfite + 2 H(+). Transferase that catalyzes the transfer of sulfur from thiosulfate to thiophilic acceptors such as cyanide or dithiols. May function in a CysM-independent thiosulfate assimilation pathway by catalyzing the conversion of thiosulfate to sulfite, which can then be used for L-cysteine biosynthesis. This Vibrio atlanticus (strain LGP32) (Vibrio splendidus (strain Mel32)) protein is Thiosulfate sulfurtransferase GlpE.